Here is a 173-residue protein sequence, read N- to C-terminus: Large ribosomal subunit protein uL10 (173 aa).

The protein belongs to the universal ribosomal protein uL10 family. In terms of assembly, part of the ribosomal stalk of the 50S ribosomal subunit. The N-terminus interacts with L11 and the large rRNA to form the base of the stalk. The C-terminus forms an elongated spine to which L12 dimers bind in a sequential fashion forming a multimeric L10(L12)X complex.

Its function is as follows. Forms part of the ribosomal stalk, playing a central role in the interaction of the ribosome with GTP-bound translation factors. The sequence is that of Large ribosomal subunit protein uL10 from Beutenbergia cavernae (strain ATCC BAA-8 / DSM 12333 / CCUG 43141 / JCM 11478 / NBRC 16432 / NCIMB 13614 / HKI 0122).